The following is a 297-amino-acid chain: N-acetylmuramic acid 6-phosphate etherase (297 aa).

Residues 55–218 (AAAALKSGGR…STGAMVKFGK (164 aa)) form the SIS domain. E83 functions as the Proton donor in the catalytic mechanism. The active site involves E114.

The protein belongs to the GCKR-like family. MurNAc-6-P etherase subfamily. In terms of assembly, homodimer.

The catalysed reaction is N-acetyl-D-muramate 6-phosphate + H2O = N-acetyl-D-glucosamine 6-phosphate + (R)-lactate. It functions in the pathway amino-sugar metabolism; 1,6-anhydro-N-acetylmuramate degradation. Its pathway is amino-sugar metabolism; N-acetylmuramate degradation. The protein operates within cell wall biogenesis; peptidoglycan recycling. In terms of biological role, specifically catalyzes the cleavage of the D-lactyl ether substituent of MurNAc 6-phosphate, producing GlcNAc 6-phosphate and D-lactate. Together with AnmK, is also required for the utilization of anhydro-N-acetylmuramic acid (anhMurNAc) either imported from the medium or derived from its own cell wall murein, and thus plays a role in cell wall recycling. The protein is N-acetylmuramic acid 6-phosphate etherase of Salmonella typhi.